The sequence spans 434 residues: Ribosomal protein uS12 methylthiotransferase RimO (434 aa).

Residues 2-112 (AKIGFVSLGC…VLEAVQEVLP (111 aa)) form the MTTase N-terminal domain. [4Fe-4S] cluster is bound by residues C11, C47, C76, C142, C146, and C149. Residues 128 to 365 (LTPRHYAYVK…LEVQARVSLR (238 aa)) enclose the Radical SAM core domain. The TRAM domain occupies 368–434 (QRFVGKTLEV…DTYDLHGVQA (67 aa)).

Belongs to the methylthiotransferase family. RimO subfamily. [4Fe-4S] cluster is required as a cofactor.

The protein resides in the cytoplasm. The catalysed reaction is L-aspartate(89)-[ribosomal protein uS12]-hydrogen + (sulfur carrier)-SH + AH2 + 2 S-adenosyl-L-methionine = 3-methylsulfanyl-L-aspartate(89)-[ribosomal protein uS12]-hydrogen + (sulfur carrier)-H + 5'-deoxyadenosine + L-methionine + A + S-adenosyl-L-homocysteine + 2 H(+). In terms of biological role, catalyzes the methylthiolation of an aspartic acid residue of ribosomal protein uS12. This Thermus thermophilus (strain ATCC BAA-163 / DSM 7039 / HB27) protein is Ribosomal protein uS12 methylthiotransferase RimO.